The sequence spans 339 residues: Anthranilate phosphoribosyltransferase (339 aa).

Residues Gly80, 83-84 (GD), Thr88, 90-93 (NIST), 108-116 (KHGNRAVSS), and Ser120 each bind 5-phospho-alpha-D-ribose 1-diphosphate. Gly80 contacts anthranilate. Residue Ser92 coordinates Mg(2+). Residue Asn111 coordinates anthranilate. Position 166 (Arg166) interacts with anthranilate. Positions 225 and 226 each coordinate Mg(2+).

Belongs to the anthranilate phosphoribosyltransferase family. In terms of assembly, homodimer. Requires Mg(2+) as cofactor.

It catalyses the reaction N-(5-phospho-beta-D-ribosyl)anthranilate + diphosphate = 5-phospho-alpha-D-ribose 1-diphosphate + anthranilate. The protein operates within amino-acid biosynthesis; L-tryptophan biosynthesis; L-tryptophan from chorismate: step 2/5. In terms of biological role, catalyzes the transfer of the phosphoribosyl group of 5-phosphorylribose-1-pyrophosphate (PRPP) to anthranilate to yield N-(5'-phosphoribosyl)-anthranilate (PRA). The sequence is that of Anthranilate phosphoribosyltransferase from Caldanaerobacter subterraneus subsp. tengcongensis (strain DSM 15242 / JCM 11007 / NBRC 100824 / MB4) (Thermoanaerobacter tengcongensis).